Here is a 247-residue protein sequence, read N- to C-terminus: Acetoacetate decarboxylase (247 aa).

Lys116 serves as the catalytic Schiff-base intermediate with acetoacetate.

Belongs to the ADC family.

It carries out the reaction acetoacetate + H(+) = acetone + CO2. In terms of biological role, catalyzes the conversion of acetoacetate to acetone and carbon dioxide. This chain is Acetoacetate decarboxylase, found in Ralstonia nicotianae (strain ATCC BAA-1114 / GMI1000) (Ralstonia solanacearum).